The primary structure comprises 726 residues: MAAAKWLIASLAFASSGLAFTPEDFISAPRRGEAIPDPKGELAVFHVSKYNFDKKDRPSGWNLLNLKNGDISVLTTDSDISEITWLGDGTKIVYVNGTDSVKGGVGIWISDAKNFGNAYKAGSVNGAFSGLKLAKSGDKINFVGYGQSTTKGDLYNEAAAKEAVSSARIYDSLFVRHWDTYVGTQFNAVFSGALTKSGDKYSFDGKLKNLVHPVKYAESPYPPFGGSGDYDLSSDGKTVAFMSKAPELPKANLTTTYIFVVPHDGSRVAEPINKRNGPRTPQGIEGASSSPVFSPDGKRIAYLQMATKNYESDRRVIHIAEVGSNKPVQRIASNWDRSPEVVKWSSDGRTLYVTAEDHATGKLFTLPADARDSHKPAVVKHDGSVSSFYFVGSSKSVLISGNSLWSNALFQVATPGRPNRKLFYANEHDPELKGLGPNDIEPLWVDGARTKIHSWIVKPTGFDKNKVYPLAFLIHGGPQGSWGDSWSTRWNPRVWADQGYVVVAPNPTGSTGFGQKLTDDITNDWGGAPYKDLVKIWEHVRDHIKYIDTDNGIAAGASFGGFMVNWIQGHDLGRKFKALVSHDGTFVGSSKIGTDELFFIEHDFNGTFFEARQNYDRWDCSKPELVAKWSTPQLVIHNDFDFRLSVAEGVGLFNVLQEKGIPSRFLNFPDETHWVTKPENSLVWHQQVLGWINKWSGINKSNPKSIKLSDCPIEVVDHEAHSYFDY.

An N-terminal signal peptide occupies residues 1–19 (MAAAKWLIASLAFASSGLA). N-linked (GlcNAc...) asparagine glycans are attached at residues Asn96 and Asn252. The segment at 269–291 (AEPINKRNGPRTPQGIEGASSSP) is disordered. Ser558 serves as the catalytic Charge relay system. Asn605 is a glycosylation site (N-linked (GlcNAc...) asparagine). Active-site charge relay system residues include Asp641 and His673. The N-linked (GlcNAc...) asparagine glycan is linked to Asn699.

Belongs to the peptidase S9C family.

The protein localises to the secreted. In terms of biological role, extracellular dipeptidyl-peptidase which removes N-terminal dipeptides sequentially from polypeptides having unsubstituted N-termini. Contributes to pathogenicity. The chain is Dipeptidyl-peptidase 5 (DPP5) from Trichophyton tonsurans (Scalp ringworm fungus).